The chain runs to 340 residues: Replication initiation protein (340 aa).

The interval 38 to 58 (PERKRTKRRRGEHSTKPKCEN) is disordered.

The protein is Replication initiation protein (repA1) of Escherichia coli.